We begin with the raw amino-acid sequence, 340 residues long: Tryptophan--tRNA ligase (340 aa).

ATP contacts are provided by residues 11–13 (RPT) and 19–20 (GH). Positions 12–20 (PTGKLHLGH) match the 'HIGH' region motif. Aspartate 140 serves as a coordination point for L-tryptophan. ATP-binding positions include 152–154 (GND), leucine 194, and 202–206 (KMSKS). A 'KMSKS' region motif is present at residues 202–206 (KMSKS).

This sequence belongs to the class-I aminoacyl-tRNA synthetase family. In terms of assembly, homodimer.

It localises to the cytoplasm. It catalyses the reaction tRNA(Trp) + L-tryptophan + ATP = L-tryptophyl-tRNA(Trp) + AMP + diphosphate + H(+). Catalyzes the attachment of tryptophan to tRNA(Trp). This is Tryptophan--tRNA ligase from Streptococcus pyogenes serotype M3 (strain ATCC BAA-595 / MGAS315).